The primary structure comprises 104 residues: MESKMKVLKLFRTLHRTRQCVFQNDHRALEAARQRINEEFKKNKRECSPAKISELLKFGTDVEILLRTSVVQGIHKDSDTLVLQARKDLLLDNIPFCDAPEKQT.

Residues 21–48 (VFQNDHRALEAARQRINEEFKKNKRECS) adopt a coiled-coil conformation.

It belongs to the complex I LYR family. In terms of assembly, interacts with UQCRFS1.

It localises to the mitochondrion matrix. In terms of biological role, assembly factor required for Rieske Fe-S protein UQCRFS1 incorporation into the cytochrome b-c1 (CIII) complex. Functions as a chaperone, binding to this subunit within the mitochondrial matrix and stabilizing it prior to its translocation and insertion into the late CIII dimeric intermediate within the mitochondrial inner membrane. This chain is Complex III assembly factor LYRM7 (lyrm7), found in Xenopus laevis (African clawed frog).